A 272-amino-acid chain; its full sequence is L-aspartate dehydrogenase 3 (272 aa).

Ala126 and Asn194 together coordinate NAD(+). His224 is an active-site residue.

Belongs to the L-aspartate dehydrogenase family.

It catalyses the reaction L-aspartate + NADP(+) + H2O = oxaloacetate + NH4(+) + NADPH + H(+). The catalysed reaction is L-aspartate + NAD(+) + H2O = oxaloacetate + NH4(+) + NADH + H(+). The protein operates within cofactor biosynthesis; NAD(+) biosynthesis; iminoaspartate from L-aspartate (dehydrogenase route): step 1/1. Its function is as follows. Specifically catalyzes the NAD or NADP-dependent dehydrogenation of L-aspartate to iminoaspartate. The chain is L-aspartate dehydrogenase 3 from Bordetella bronchiseptica (strain ATCC BAA-588 / NCTC 13252 / RB50) (Alcaligenes bronchisepticus).